Here is a 155-residue protein sequence, read N- to C-terminus: Ribosomal RNA large subunit methyltransferase H (155 aa).

S-adenosyl-L-methionine is bound by residues leucine 72, glycine 103, and 122–127 (LSPLTL).

Belongs to the RNA methyltransferase RlmH family. In terms of assembly, homodimer.

It is found in the cytoplasm. It carries out the reaction pseudouridine(1915) in 23S rRNA + S-adenosyl-L-methionine = N(3)-methylpseudouridine(1915) in 23S rRNA + S-adenosyl-L-homocysteine + H(+). Functionally, specifically methylates the pseudouridine at position 1915 (m3Psi1915) in 23S rRNA. The sequence is that of Ribosomal RNA large subunit methyltransferase H from Mannheimia succiniciproducens (strain KCTC 0769BP / MBEL55E).